Reading from the N-terminus, the 318-residue chain is uncharacterized protein (318 aa).

It belongs to the glycosyltransferase 2 family.

This is an uncharacterized protein from Rickettsia prowazekii (strain Madrid E).